Reading from the N-terminus, the 454-residue chain is UPF0210 protein BLA_0552 (454 aa).

Belongs to the UPF0210 family. As to quaternary structure, homodimer.

This chain is UPF0210 protein BLA_0552, found in Bifidobacterium animalis subsp. lactis (strain AD011).